Reading from the N-terminus, the 185-residue chain is Large ribosomal subunit protein uL5 (185 aa).

The protein belongs to the universal ribosomal protein uL5 family. As to quaternary structure, part of the 50S ribosomal subunit; part of the 5S rRNA/L5/L18/L25 subcomplex. Contacts the 5S rRNA and the P site tRNA. Forms a bridge to the 30S subunit in the 70S ribosome.

Functionally, this is one of the proteins that bind and probably mediate the attachment of the 5S RNA into the large ribosomal subunit, where it forms part of the central protuberance. In the 70S ribosome it contacts protein S13 of the 30S subunit (bridge B1b), connecting the 2 subunits; this bridge is implicated in subunit movement. Contacts the P site tRNA; the 5S rRNA and some of its associated proteins might help stabilize positioning of ribosome-bound tRNAs. In Treponema pallidum (strain Nichols), this protein is Large ribosomal subunit protein uL5.